The following is a 581-amino-acid chain: MILSRSVSVLHLCGVSSSAPSKLLSQRFKVSFALAYGSSVSFRLSSLNRSDRKWVRGFASATEAEVEKKGNDTFFADHTVSWKSLGLSDNVSIALRDSGFDRPSLTQAVCIPSILSGKDVIVAAETGSGKTHGYLAPIIDQLTNTALDSEVTNREERPFPLKNISLILCPNVMLCEQVVRMVNGLVDEDGNPLLRVEAVCGSQGWPDRLPDIIVSTPAALLNNIEPKRNRRLEFLRCVKYVVFDEADMLLCGSFQNQIIRLINMLRFDEKQVSRLAKSNLGRPMEIDASVPQIDLENEDDAEFDEGSISEEEDEEEEEEYLDDIAQMPSVEAEAGSDTKKGWRRVRKIYTRSKQYIFIAATLPVNGKKTAGGILKHMFQDAVWVSGNFLHRNSPRLKQKWVEVTVDSQVDALIEAVKNNNNTNTERTMVFANTVEAVEAVADILEKASIQCYRYHKNHKLDERANILADFRETGGVFVCTDAAARGVDVPNVSHVIQADFASSAVDFLHRIGRTARAGQYGTVTSLYTEANRDLVEAIREAVKMGQPVETAFSRKRGFRNKVKKRAFLKAEEAEEPQAVRY.

The Q motif motif lies at 80 to 108 (VSWKSLGLSDNVSIALRDSGFDRPSLTQA). Residues 111-380 (IPSILSGKDV…GGILKHMFQD (270 aa)) enclose the Helicase ATP-binding domain. 124–131 (AETGSGKT) contacts ATP. Residues 244–247 (DEAD) carry the DEAD box motif. The Helicase C-terminal domain occupies 408–566 (QVDALIEAVK…GFRNKVKKRA (159 aa)).

This sequence belongs to the DEAD box helicase family.

It catalyses the reaction ATP + H2O = ADP + phosphate + H(+). The polypeptide is DEAD-box ATP-dependent RNA helicase 22 (RH22) (Arabidopsis thaliana (Mouse-ear cress)).